A 296-amino-acid chain; its full sequence is Decaprenyl diphosphate synthase (296 aa).

Residues 1-58 (MVRNERTLKSTDFPQLPPAPDDYPTFPDKSTWPVVFPMLPPSPDGGPRRPPQHTSKAV) form a disordered region. Residue aspartate 76 is part of the active site. Aspartate 76 contributes to the Mg(2+) binding site. Residues 77–80 (GNGR), tryptophan 81, arginine 89, histidine 93, and 121–123 (STE) contribute to the substrate site. Residue asparagine 124 is the Proton acceptor of the active site. Residues tryptophan 125, arginine 127, arginine 244, and 250–252 (RSS) contribute to the substrate site. Glutamate 263 contacts Mg(2+).

It belongs to the UPP synthase family. In terms of assembly, homodimer. It depends on Mg(2+) as a cofactor.

It is found in the cell membrane. It catalyses the reaction (2Z,6E)-farnesyl diphosphate + 7 isopentenyl diphosphate = (2Z,6Z,10Z,14Z,18Z,22Z,26Z,30Z,34E)-decaprenyl diphosphate + 7 diphosphate. The catalysed reaction is n isopentenyl diphosphate + (2E,6E)-farnesyl diphosphate = a di-trans,poly-cis-polyprenyl diphosphate + n diphosphate. In terms of biological role, catalyzes the sequential condensation of isopentenyl diphosphate (IPP) in the cis configuration with (2Z,6E)-farnesyl diphosphate (Z-FPP or EZ-FPP) generating the 50 carbon product trans,polycis-decaprenyl diphosphate. When (2E,6E)-farnesyl diphosphate (E-FPP or EE-FPP) is used in vitro, both primary products decaprenyl diphosphate and (2E,6E,10E)-geranylgeranyl diphosphate (EEE-GGPP) are synthesized. M.tuberculosis does not synthesize (2E,6E,10Z)-geranylgeranyl diphosphate (EEZ-GGPP) and heptaprenyl diphosphate. Can also accept many different allylic substrates, including E-geranyl diphosphate (E-GPP), neryl diphosphate (NPP), and all-trans-geranyl-geranyl diphosphate. The chain is Decaprenyl diphosphate synthase (uppS) from Mycobacterium leprae (strain TN).